The chain runs to 675 residues: Vitamin K-dependent protein S (675 aa).

The first 24 residues, 1 to 24, serve as a signal peptide directing secretion; the sequence is MRVLSARFRVLLACLALVIPVSET. Residues 25-41 constitute a propeptide that is removed on maturation; that stretch reads NFLSKERASQVLVRKRR. The 46-residue stretch at 42-87 folds into the Gla domain; it reads ANTLFEETMKGNLERECIEELCNKEEAREVFENNPETDYFYPKYLG. 4-carboxyglutamate is present on residues E47, E48, E55, E57, E60, E61, E66, E67, E70, E73, and E77. The cysteines at positions 58 and 63 are disulfide-linked. The tract at residues 88–116 is thrombin-sensitive; that stretch reads CLGAFRVGSFHAARQSANAYPDLRSCVKA. In terms of domain architecture, EGF-like 1 spans 117–155; sequence ISDQCDPIPCNEDGYLACQDGQAAFTCFCKPGWQGDRCQ. 13 disulfide bridges follow: C121/C134, C126/C143, C145/C154, C161/C175, C171/C184, C186/C199, C205/C217, C212/C226, C228/C241, C247/C256, C252/C265, C267/C282, and C449/C475. D136 carries the (3R)-3-hydroxyaspartate modification. The EGF-like 2; calcium-binding domain occupies 157 to 200; that stretch reads DVNECKDPSNVNGGCSQICDNTPGSYHCSCKRGFAMLPNKKDCK. An EGF-like 3; calcium-binding domain is found at 201–242; the sequence is DLDECALKPSVCGTAVCKNIPGDFECECPDGYRYDPSSKSCK. Residues 243-283 enclose the EGF-like 4; calcium-binding domain; it reads DVDECSENMCAQLCVNFPGGYSCYCDGKKGFKLAQDQKSCE. Laminin G-like domains lie at 299–475 and 484–665; these read LLYL…NKHC and YYPG…AHSC. 2 N-linked (GlcNAc...) asparagine glycosylation sites follow: N499 and N509. C638 and C665 are disulfide-bonded.

The iron and 2-oxoglutarate dependent 3-hydroxylation of aspartate and asparagine is (R) stereospecific within EGF domains. In terms of tissue distribution, plasma.

It localises to the secreted. Its function is as follows. Anticoagulant plasma protein; it is a cofactor to activated protein C in the degradation of coagulation factors Va and VIIIa. It helps to prevent coagulation and stimulating fibrinolysis. The sequence is that of Vitamin K-dependent protein S (Pros1) from Mus musculus (Mouse).